The sequence spans 341 residues: Homeobox protein mls-2 (341 aa).

Disordered stretches follow at residues 1–78 (MPTS…DSTN) and 139–209 (SNPD…TVFS). The span at 64–78 (TTQSSPSASSEDSTN) shows a compositional bias: polar residues. Over residues 153-166 (KDEKSEGKDGETRD) the composition is skewed to basic and acidic residues. The segment at residues 201–260 (KKKTRTVFSRSQVSQLEMMFECKRYLSSQERSNLAQKLHLTETQVKIWFQNRRNKFKRQA) is a DNA-binding region (homeobox).

Belongs to the HMX homeobox family. Expressed in a subset of head neurons, including AIM and ASK (at protein level).

It is found in the nucleus. Its function is as follows. Transcription factor that binds to the promoter of target genes. Regulates fate specification and/or differentiation of multiple cell types arising from the embryonic mesodermal (M) lineage and the ABp(l/r)paa precursors. In the postembryonic M lineage, regulates cleavage orientation, cell proliferation and cell fate specification. Regulates hlh-1 expression to specify coelomocyte fate in the mesodermal (M) lineage. In AWC neurons, initiates expression of ceh-36, leading to the expression of terminal differentiation genes. Regulates ventral cephalic sheath (CEPsh) glia differentiation and expression of transcription factor hlh-17 in CEPsh glia. Promotes terminal differentiation and morphogenesis of the epithelial duct and pore cells. In the duct cell, cooperates with the EGF-Ras-ERK pathway in turning on the terminal differentiation gene lin-48. In Caenorhabditis elegans, this protein is Homeobox protein mls-2.